We begin with the raw amino-acid sequence, 300 residues long: Centromere protein O (300 aa).

Coiled-coil stretches lie at residues 18 to 42 (LAHL…QSVQ) and 83 to 109 (NQTV…QAYH). The residue at position 35 (Ser35) is a Phosphoserine.

It belongs to the CENP-O/MCM21 family. In terms of assembly, component of the CENPA-CAD complex, composed of CENPI, CENPK, CENPL, CENPO, CENPP, CENPQ, CENPR and CENPS. The CENPA-CAD complex interacts with the CENPA-NAC complex, at least composed of CENPA, CENPC, CENPH, CENPM, CENPN, CENPT and CENPU.

Its subcellular location is the nucleus. The protein resides in the chromosome. It is found in the centromere. The protein localises to the kinetochore. Component of the CENPA-CAD (nucleosome distal) complex, a complex recruited to centromeres which is involved in assembly of kinetochore proteins, mitotic progression and chromosome segregation. May be involved in incorporation of newly synthesized CENPA into centromeres via its interaction with the CENPA-NAC complex. Modulates the kinetochore-bound levels of NDC80 complex. The sequence is that of Centromere protein O (CENPO) from Homo sapiens (Human).